The following is a 243-amino-acid chain: Probable 2-phosphosulfolactate phosphatase (243 aa).

The protein belongs to the ComB family. The cofactor is Mg(2+).

The catalysed reaction is (2R)-O-phospho-3-sulfolactate + H2O = (2R)-3-sulfolactate + phosphate. The protein is Probable 2-phosphosulfolactate phosphatase of Prochlorococcus marinus (strain MIT 9313).